The following is a 63-amino-acid chain: Large ribosomal subunit protein uL29 (63 aa).

Belongs to the universal ribosomal protein uL29 family.

The polypeptide is Large ribosomal subunit protein uL29 (Sodalis glossinidius (strain morsitans)).